Consider the following 176-residue polypeptide: MTTIVSVRRNGHVVIAGDGQATLGNTVMKGNVKKVRRLYNDKVIAGFAGGTADAFTLFELFERKLEMHQGHLVKAAVELAKDWRTDRMLRKLEALLAVADETASLIITGNGDVVQPENDLIAIGSGGPYAQAAARALLENTELSAREIAEKALDIAGDICIYTNHFHTIEELSYKA.

T2 is an active-site residue. G157, C160, and T163 together coordinate Na(+).

This sequence belongs to the peptidase T1B family. HslV subfamily. A double ring-shaped homohexamer of HslV is capped on each side by a ring-shaped HslU homohexamer. The assembly of the HslU/HslV complex is dependent on binding of ATP.

It is found in the cytoplasm. It carries out the reaction ATP-dependent cleavage of peptide bonds with broad specificity.. Its activity is regulated as follows. Allosterically activated by HslU binding. Functionally, protease subunit of a proteasome-like degradation complex believed to be a general protein degrading machinery. This chain is ATP-dependent protease subunit HslV, found in Escherichia coli O139:H28 (strain E24377A / ETEC).